The primary structure comprises 251 residues: Pyrroloquinoline-quinone synthase (251 aa).

Belongs to the PqqC family.

The catalysed reaction is 6-(2-amino-2-carboxyethyl)-7,8-dioxo-1,2,3,4,7,8-hexahydroquinoline-2,4-dicarboxylate + 3 O2 = pyrroloquinoline quinone + 2 H2O2 + 2 H2O + H(+). It participates in cofactor biosynthesis; pyrroloquinoline quinone biosynthesis. Functionally, ring cyclization and eight-electron oxidation of 3a-(2-amino-2-carboxyethyl)-4,5-dioxo-4,5,6,7,8,9-hexahydroquinoline-7,9-dicarboxylic-acid to PQQ. The polypeptide is Pyrroloquinoline-quinone synthase (Pseudomonas syringae pv. tomato (strain ATCC BAA-871 / DC3000)).